Consider the following 323-residue polypeptide: Delta-aminolevulinic acid dehydratase (323 aa).

Residues cysteine 118, cysteine 120, and cysteine 128 each coordinate Zn(2+). Lysine 195 acts as the Schiff-base intermediate with substrate in catalysis. Positions 205 and 217 each coordinate 5-aminolevulinate. Residue glutamate 233 coordinates Mg(2+). Lysine 248 acts as the Schiff-base intermediate with substrate in catalysis. Residues serine 274 and tyrosine 313 each contribute to the 5-aminolevulinate site.

The protein belongs to the ALAD family. As to quaternary structure, homooctamer. It depends on Zn(2+) as a cofactor.

It carries out the reaction 2 5-aminolevulinate = porphobilinogen + 2 H2O + H(+). It participates in porphyrin-containing compound metabolism; protoporphyrin-IX biosynthesis; coproporphyrinogen-III from 5-aminolevulinate: step 1/4. Its function is as follows. Catalyzes an early step in the biosynthesis of tetrapyrroles. Binds two molecules of 5-aminolevulinate per subunit, each at a distinct site, and catalyzes their condensation to form porphobilinogen. This Staphylococcus aureus protein is Delta-aminolevulinic acid dehydratase (hemB).